The sequence spans 129 residues: Selenoprotein M (129 aa).

Residues 1–19 (MARGLAVFFLLAGACLALA) form the signal peptide. Active-site nucleophile residues include Cys35 and Sec38. A non-standard amino acid (selenocysteine) is located at residue Sec38. The disordered stretch occupies residues 107–129 (KSSKDEQVPEEYQEGPYMEKEEL). The short motif at 126-129 (KEEL) is the Prevents secretion from ER element.

Belongs to the selenoprotein M/F family. As to expression, high expression levels observed in hepatopancreas, testis, ovaries and intestine. Also expressed in heart, stomach, gills, cranial ganglia, muscle and hematocytes.

The protein localises to the endoplasmic reticulum. May function as a thiol-disulfide oxidoreductase that participates in disulfide bond formation. Involved in the regulation of reproduction during the period of rapid gonadal development. The sequence is that of Selenoprotein M from Eriocheir sinensis (Chinese mitten crab).